The primary structure comprises 344 residues: L-rhamnose-proton symporter (344 aa).

The next 10 helical transmembrane spans lie at 4 to 24 (AITMGIFWHLIGAASAACFYA), 38 to 58 (WSVGGIVSWLILPWTISALLL), 68 to 88 (FNLSTLLPVFLFGAMWGIGNI), 101 to 121 (MGIGIAIGITLIVGTLMTPII), 137 to 157 (TLLGVFVALIGVGIVTRAGQL), 175 to 195 (LLLAVICGIFSAGMSFAMNAA), 214 to 234 (LPSYVVIMGGGALVNLGFCFI), 259 to 279 (ILLSALGGLMWYLQFFFYAWG), 290 to 310 (MSWMLHMSFYVLCGGLVGLVL), and 321 to 341 (VAVLSLGCVVIIIAANIVGLG).

The protein belongs to the L-rhamnose transporter (TC 2.A.7.6) family.

The protein localises to the cell inner membrane. It carries out the reaction L-rhamnopyranose(in) + H(+)(in) = L-rhamnopyranose(out) + H(+)(out). In terms of biological role, uptake of L-rhamnose across the cytoplasmic membrane with the concomitant transport of protons into the cell (symport system). The protein is L-rhamnose-proton symporter of Salmonella paratyphi A (strain ATCC 9150 / SARB42).